Here is a 306-residue protein sequence, read N- to C-terminus: Probable rRNA-processing protein EBP2 (306 aa).

Met-1 is subject to N-acetylmethionine. 2 disordered regions span residues 1 to 20 and 77 to 99; these read MDTP…LVTD and VPEI…VDPE. The residue at position 3 (Thr-3) is a Phosphothreonine. Phosphoserine is present on residues Ser-7, Ser-9, Ser-11, Ser-13, and Ser-16. A Glycyl lysine isopeptide (Lys-Gly) (interchain with G-Cter in SUMO2) cross-link involves residue Lys-94. Residues 138 to 169 are a coiled coil; that stretch reads AEMAKSDLQMQKIRQKLQTKQAAMERSEKAKQ. Residues Lys-179 and Lys-218 each participate in a glycyl lysine isopeptide (Lys-Gly) (interchain with G-Cter in SUMO2) cross-link. Residues 213–306 are disordered; sequence LEGDQKPLAQ…TREKMKNRTH (94 aa). Residues Ser-264 and Ser-270 each carry the phosphoserine modification. Residues 274-306 are compositionally biased toward basic residues; sequence KTAHGRGLKRPGKKGSNKRPGKRTREKMKNRTH.

Belongs to the EBP2 family. Specifically interacts with EBV EBNA1. The EBNA1-EBP2 interaction is important for the stable segregation of EBV episomes during cell division. Interacts with WDR46. Ubiquitous.

The protein localises to the nucleus. It localises to the nucleolus. Required for the processing of the 27S pre-rRNA. The polypeptide is Probable rRNA-processing protein EBP2 (EBNA1BP2) (Homo sapiens (Human)).